Reading from the N-terminus, the 272-residue chain is S-adenosylmethionine decarboxylase proenzyme (272 aa).

Serine 122 (schiff-base intermediate with substrate; via pyruvic acid) is an active-site residue. The residue at position 122 (serine 122) is a Pyruvic acid (Ser); by autocatalysis. Histidine 127 acts as the Proton acceptor; for processing activity in catalysis. The Proton donor; for catalytic activity role is filled by cysteine 150.

It belongs to the prokaryotic AdoMetDC family. Type 2 subfamily. Heterooctamer of four alpha and four beta chains arranged as a tetramer of alpha/beta heterodimers. Requires pyruvate as cofactor. In terms of processing, is synthesized initially as an inactive proenzyme. Formation of the active enzyme involves a self-maturation process in which the active site pyruvoyl group is generated from an internal serine residue via an autocatalytic post-translational modification. Two non-identical subunits are generated from the proenzyme in this reaction, and the pyruvate is formed at the N-terminus of the alpha chain, which is derived from the carboxyl end of the proenzyme. The post-translation cleavage follows an unusual pathway, termed non-hydrolytic serinolysis, in which the side chain hydroxyl group of the serine supplies its oxygen atom to form the C-terminus of the beta chain, while the remainder of the serine residue undergoes an oxidative deamination to produce ammonia and the pyruvoyl group blocking the N-terminus of the alpha chain.

The catalysed reaction is S-adenosyl-L-methionine + H(+) = S-adenosyl 3-(methylsulfanyl)propylamine + CO2. It participates in amine and polyamine biosynthesis; S-adenosylmethioninamine biosynthesis; S-adenosylmethioninamine from S-adenosyl-L-methionine: step 1/1. Its function is as follows. Catalyzes the decarboxylation of S-adenosylmethionine to S-adenosylmethioninamine (dcAdoMet), the propylamine donor required for the synthesis of the polyamines spermine and spermidine from the diamine putrescine. The sequence is that of S-adenosylmethionine decarboxylase proenzyme from Clostridium botulinum (strain Alaska E43 / Type E3).